Reading from the N-terminus, the 219-residue chain is Ras-related protein Rab-3B (219 aa).

Ala2 is modified (N-acetylalanine). GTP contacts are provided by Ser31, Ser32, Val33, Gly34, Lys35, Thr36, Ser37, Pro49, and Ser53. Ser32 contacts GDP. 4 residues coordinate GDP: Gly34, Lys35, Thr36, and Ser37. Residue Thr36 coordinates Mg(2+). The short motif at 45 to 58 (DTFTPAFVSTVGID) is the Switch 1 element. Thr54 and Asp77 together coordinate Mg(2+). The Switch 2 motif lies at 78 to 96 (TAGQERYRTITTAYYRGAM). Gly80 provides a ligand contact to GTP. Phosphothreonine; by LRRK2 is present on Thr86. GTP-binding residues include Asn135, Lys136, and Asp138. GDP contacts are provided by Asn135, Lys136, Asp138, Met139, Ala166, and Lys167. GTP is bound by residues Ala166 and Lys167. Phosphoserine is present on residues Ser188 and Ser190. 2 S-geranylgeranyl cysteine lipidation sites follow: Cys217 and Cys219. A Cysteine methyl ester modification is found at Cys219.

The protein belongs to the small GTPase superfamily. Rab family. As to quaternary structure, interacts with RIMS1, RIMS2, RPH3A and RPH3AL. The GTP-bound form interacts with GAS8/DRC4 (via coiled-coil domains). The GTP-bound form interacts with REP15. Interacts with GDI2, CHM and CHML; phosphorylation at Thr-86 disrupts these interactions. Interacts with MADD (via uDENN domain); the GTP-bound form is preferred for interaction. Mg(2+) serves as cofactor. Phosphorylation of Thr-86 in the switch II region by LRRK2 prevents the association of RAB regulatory proteins, including CHM, CHML and RAB GDP dissociation inhibitor GDI2.

Its subcellular location is the cell membrane. It localises to the golgi apparatus. It catalyses the reaction GTP + H2O = GDP + phosphate + H(+). Regulated by guanine nucleotide exchange factors (GEFs) which promote the exchange of bound GDP for free GTP. Regulated by GTPase activating proteins (GAPs) which increase the GTP hydrolysis activity. Inhibited by GDP dissociation inhibitors (GDIs) which prevent Rab-GDP dissociation. Functionally, the small GTPases Rab are key regulators of intracellular membrane trafficking, from the formation of transport vesicles to their fusion with membranes. Rabs cycle between an inactive GDP-bound form and an active GTP-bound form that is able to recruit to membranes different sets of downstream effectors directly responsible for vesicle formation, movement, tethering and fusion. The protein is Ras-related protein Rab-3B of Homo sapiens (Human).